The sequence spans 513 residues: GMP synthase [glutamine-hydrolyzing] (513 aa).

One can recognise a Glutamine amidotransferase type-1 domain in the interval 3 to 200 (SVTVLDFGSQ…LIDIAGIKPD (198 aa)). Residue cysteine 80 is the Nucleophile of the active site. Active-site residues include histidine 174 and glutamate 176. Residues 201 to 388 (WSPKSFIGHQ…LGIAEDILMR (188 aa)) enclose the GMPS ATP-PPase domain. Residue 228–234 (SGGVDST) participates in ATP binding.

In terms of assembly, homodimer.

It carries out the reaction XMP + L-glutamine + ATP + H2O = GMP + L-glutamate + AMP + diphosphate + 2 H(+). The protein operates within purine metabolism; GMP biosynthesis; GMP from XMP (L-Gln route): step 1/1. Catalyzes the synthesis of GMP from XMP. This is GMP synthase [glutamine-hydrolyzing] from Chlorobium phaeobacteroides (strain DSM 266 / SMG 266 / 2430).